The following is a 656-amino-acid chain: DNA mismatch repair protein MutL (656 aa).

Residues 385–427 form a disordered region; the sequence is DNSDSLTEQNSTDYTVNQPETGSVSEKITDRTVESSNEFTDRT. The segment covering 387–410 has biased composition (polar residues); it reads SDSLTEQNSTDYTVNQPETGSVSE. Residues 411 to 427 show a composition bias toward basic and acidic residues; sequence KITDRTVESSNEFTDRT.

The protein belongs to the DNA mismatch repair MutL/HexB family.

This protein is involved in the repair of mismatches in DNA. It is required for dam-dependent methyl-directed DNA mismatch repair. May act as a 'molecular matchmaker', a protein that promotes the formation of a stable complex between two or more DNA-binding proteins in an ATP-dependent manner without itself being part of a final effector complex. This Lactococcus lactis subsp. cremoris (strain SK11) protein is DNA mismatch repair protein MutL.